The primary structure comprises 164 residues: Interleukin-36 beta (164 aa).

The propeptide occupies M1 to Q4.

This sequence belongs to the IL-1 family. In terms of assembly, interacts with cargo receptor TMED10; the interaction mediates the translocation from the cytoplasm into the ERGIC (endoplasmic reticulum-Golgi intermediate compartment) and thereby secretion. In terms of processing, N-terminal truncation leads to a dramatic enhancement of its activity (&gt;1000-fold). In terms of tissue distribution, expression at low levels in tonsil, bone marrow, heart, placenta, lung, testis and colon but not in any hematopoietic cell lines. Not detected in adipose tissue. Expressed at higher levels in psoriatic plaques than in symptomless psoriatic skin or healthy control skin. Increased levels are not detected in inflamed joint tissue.

It localises to the cytoplasm. It is found in the secreted. Cytokine that binds to and signals through the IL1RL2/IL-36R receptor which in turn activates NF-kappa-B and MAPK signaling pathways in target cells linked to a pro-inflammatory response. Part of the IL-36 signaling system that is thought to be present in epithelial barriers and to take part in local inflammatory response; similar to the IL-1 system with which it shares the coreceptor IL1RAP. Stimulates production of interleukin-6 and interleukin-8 in synovial fibrobasts, articular chondrocytes and mature adipocytes. Induces expression of a number of antimicrobial peptides including beta-defensins 4 and 103 as well as a number of matrix metalloproteases. Seems to be involved in skin inflammatory response by acting on keratinocytes, dendritic cells and indirectly on T-cells to drive tissue infiltration, cell maturation and cell proliferation. In cultured keratinocytes induces the expression of macrophage, T-cell, and neutrophil chemokines, such as CCL3, CCL4, CCL5, CCL2, CCL17, CCL22, CL20, CCL5, CCL2, CCL17, CCL22, CXCL8, CCL20 and CXCL1, and the production of pro-inflammatory cytokines such as TNF-alpha, IL-8 and IL-6. The protein is Interleukin-36 beta of Homo sapiens (Human).